The chain runs to 246 residues: Putative carbonic anhydrase 3 (246 aa).

The 242-residue stretch at G3–V244 folds into the Alpha-carbonic anhydrase domain. H61 functions as the Proton acceptor in the catalytic mechanism. Residues H91, H93, and H116 each contribute to the Zn(2+) site. T187–T188 lines the substrate pocket.

Belongs to the alpha-carbonic anhydrase family. It depends on Zn(2+) as a cofactor.

It catalyses the reaction hydrogencarbonate + H(+) = CO2 + H2O. Functionally, reversible hydration of carbon dioxide. This chain is Putative carbonic anhydrase 3 (cah-3), found in Caenorhabditis elegans.